A 79-amino-acid polypeptide reads, in one-letter code: Acyl carrier protein (79 aa).

Residues 2–77 enclose the Carrier domain; it reads SDIEERVKKI…SAIDYVNAHK (76 aa). Residue Ser-37 is modified to O-(pantetheine 4'-phosphoryl)serine.

Belongs to the acyl carrier protein (ACP) family. Post-translationally, 4'-phosphopantetheine is transferred from CoA to a specific serine of apo-ACP by AcpS. This modification is essential for activity because fatty acids are bound in thioester linkage to the sulfhydryl of the prosthetic group.

It is found in the cytoplasm. The protein operates within lipid metabolism; fatty acid biosynthesis. Carrier of the growing fatty acid chain in fatty acid biosynthesis. The protein is Acyl carrier protein of Pseudoalteromonas atlantica (strain T6c / ATCC BAA-1087).